A 142-amino-acid chain; its full sequence is Large ribosomal subunit protein uL11 (142 aa).

Belongs to the universal ribosomal protein uL11 family. As to quaternary structure, part of the ribosomal stalk of the 50S ribosomal subunit. Interacts with L10 and the large rRNA to form the base of the stalk. L10 forms an elongated spine to which L12 dimers bind in a sequential fashion forming a multimeric L10(L12)X complex. One or more lysine residues are methylated.

Its function is as follows. Forms part of the ribosomal stalk which helps the ribosome interact with GTP-bound translation factors. In Mesoplasma florum (strain ATCC 33453 / NBRC 100688 / NCTC 11704 / L1) (Acholeplasma florum), this protein is Large ribosomal subunit protein uL11.